The primary structure comprises 102 residues: MQKARIRLTGTDYEKVETVCTRIREIAERTGVNMAGPIPLPTKRLIVPIRKSPDGEGTATWDRWQMRVHKRLIDLDADERALRQLMRIQVPKDISIEIVLEN.

This sequence belongs to the universal ribosomal protein uS10 family. Part of the 30S ribosomal subunit.

In terms of biological role, involved in the binding of tRNA to the ribosomes. The polypeptide is Small ribosomal subunit protein uS10 (Methanocorpusculum labreanum (strain ATCC 43576 / DSM 4855 / Z)).